The chain runs to 266 residues: GTP cyclohydrolase III (266 aa).

Belongs to the archaeal-type GTP cyclohydrolase family.

The enzyme catalyses GTP + 3 H2O = 2-amino-5-formylamino-6-(5-phospho-D-ribosylamino)pyrimidin-4(3H)-one + 2 phosphate + 2 H(+). Functionally, catalyzes the formation of 2-amino-5-formylamino-6-ribofuranosylamino-4(3H)-pyrimidinone ribonucleotide monophosphate and inorganic phosphate from GTP. Also has an independent pyrophosphate phosphohydrolase activity. The chain is GTP cyclohydrolase III from Methanococcus maripaludis (strain DSM 14266 / JCM 13030 / NBRC 101832 / S2 / LL).